A 732-amino-acid polypeptide reads, in one-letter code: Trehalose phosphorylase (732 aa).

A propeptide spanning residues 1 to 25 (MAPPHQFQSKPSDVIRRRLSSAVSS) is cleaved from the precursor.

This sequence belongs to the glycosyltransferase group 1 family. Glycosyltransferase 4 subfamily. Homodimer.

It carries out the reaction alpha,alpha-trehalose + phosphate = alpha-D-glucose + alpha-D-glucose 1-phosphate. Activity abolished by 1 mM Cu(2+). 0.1 mM Cu(2+) reduces trehalose phosphorolysis to 76% and trehalose synthesis to 48% of maximum activity. 1 mM Zn(2+) abolishes trehalose synthesis, and reduces trehalose phosphorolysis to 40% of maximum activity. Unaffected by EDTA. In terms of biological role, reversibly catalyzes the synthesis and degradation of trehalose from glucose and alpha-D-glucose 1-phosphate. The equilibrium lies in the direction of trehalose synthesis. The chain is Trehalose phosphorylase from Grifola frondosa (Maitake).